We begin with the raw amino-acid sequence, 647 residues long: uncharacterized protein (647 aa).

The next 5 membrane-spanning stretches (helical) occupy residues 14-38 (LFPI…LAVW), 61-78 (VVAL…TTLF), 90-110 (LWLT…PAFI), 140-158 (LSAV…VIYW), and 178-195 (VIAL…RSSF).

Its subcellular location is the cell membrane. This is an uncharacterized protein from Haemophilus influenzae (strain ATCC 51907 / DSM 11121 / KW20 / Rd).